The chain runs to 103 residues: Large ribosomal subunit protein bL21 (103 aa).

Belongs to the bacterial ribosomal protein bL21 family. As to quaternary structure, part of the 50S ribosomal subunit. Contacts protein L20.

Functionally, this protein binds to 23S rRNA in the presence of protein L20. The chain is Large ribosomal subunit protein bL21 from Clostridium kluyveri (strain NBRC 12016).